The sequence spans 317 residues: Pinoresinol reductase 2 (317 aa).

Positions 18, 20, 21, 41, 50, 90, 91, 95, 98, and 121 each coordinate NADP(+). Residue Met125 coordinates (-)-pinoresinol. NADP(+) is bound by residues Lys144 and Phe166. Lys144 functions as the Proton acceptor in the catalytic mechanism. Gly178 is a binding site for (-)-pinoresinol.

It belongs to the NmrA-type oxidoreductase family. Isoflavone reductase subfamily. As to quaternary structure, forms homodimers. In terms of tissue distribution, expressed in roots. Detected in stems.

The enzyme catalyses (-)-lariciresinol + NADP(+) = (-)-pinoresinol + NADPH + H(+). Functionally, reductase involved in lignan biosynthesis. Unlike conventional pinoresinol reductases that can reduce both pinoresinol and lariciresinol, PRR2 shows a strict substrate selectivity for (-)-pinoresinol. No activity with (+)-pinoresinol or lariciresinol. Abstracts the 4R-hydride from the NADPH cofactor during catalysis. The chain is Pinoresinol reductase 2 from Arabidopsis thaliana (Mouse-ear cress).